Here is a 253-residue protein sequence, read N- to C-terminus: 5-oxoprolinase subunit A (253 aa).

It belongs to the LamB/PxpA family. In terms of assembly, forms a complex composed of PxpA, PxpB and PxpC.

It catalyses the reaction 5-oxo-L-proline + ATP + 2 H2O = L-glutamate + ADP + phosphate + H(+). Its function is as follows. Catalyzes the cleavage of 5-oxoproline to form L-glutamate coupled to the hydrolysis of ATP to ADP and inorganic phosphate. This is 5-oxoprolinase subunit A from Bacillus licheniformis (strain ATCC 14580 / DSM 13 / JCM 2505 / CCUG 7422 / NBRC 12200 / NCIMB 9375 / NCTC 10341 / NRRL NRS-1264 / Gibson 46).